We begin with the raw amino-acid sequence, 121 residues long: Small ribosomal subunit protein bS6 (121 aa).

Belongs to the bacterial ribosomal protein bS6 family.

Its function is as follows. Binds together with bS18 to 16S ribosomal RNA. The protein is Small ribosomal subunit protein bS6 of Rickettsia canadensis (strain McKiel).